Here is a 232-residue protein sequence, read N- to C-terminus: Early E1A protein (232 aa).

The interval 40–48 (PTLHDLFDV) is interaction with RB1 in competition with E2F1. Over residues 69 to 84 (TDSSASTEADSGFSPL) the composition is skewed to low complexity. The interval 69 to 97 (TDSSASTEADSGFSPLSTPPVSPIPPHPT) is disordered. Positions 85–97 (STPPVSPIPPHPT) are enriched in pro residues. The LXCXE motif, interaction with host RB1 signature appears at 107-111 (LLCLE). A zinc finger spans residues 146–164 (CLRCAFYQEQDDNALCGLC). The disordered stretch occupies residues 175 to 232 (SAGAEEEDDEVIFVSAKPGGRKRSAATPCEPDGVSKRPCVPEPEQTEPLDLSLKPRPN). Residues 222 to 226 (PLDLS) carry the PXDLS motif, CTBP-binding motif. A Nuclear localization signal motif is present at residues 228-232 (KPRPN).

It belongs to the adenoviridae E1A protein family. As to quaternary structure, interacts with host UBE2I; this interaction interferes with polySUMOylation. Interacts with host RB1; this interaction induces the aberrant dissociation of RB1-E2F1 complex thereby disrupting the activity of RB1 and activating E2F1-regulated genes. Interacts with host ATF7; the interaction enhances ATF7-mediated viral transactivation activity which requires the zinc binding domains of both proteins. Isoform early E1A 32 kDa protein and isoform early E1A 26 kDa protein interact (via N-terminus) with CUL1 and E3 ubiquitin ligase RBX1; these interactions inhibit RBX1-CUL1-dependent elongation reaction of ubiquitin chains and attenuate ubiquitination of SCF(FBXW7) target proteins. Interacts (via PXLXP motif) with host ZMYND11/BS69 (via MYND-type zinc finger); this interaction inhibits E1A mediated transactivation. Interacts with host EP300; this interaction stimulates the acetylation of RB1 by recruiting EP300 and RB1 into a multimeric-protein complex. Interacts with host CTBP1 and CTBP2; this interaction seems to potentiate viral replication. Interacts with host DCAF7. Interacts with host DYRK1A. Interacts with host KPNA4; this interaction allows E1A import into the host nucleus. Interacts with host EP400; this interaction stabilizes MYC. Interacts with host TBP protein; this interaction probably disrupts the TBP-TATA complex.

The protein resides in the host nucleus. Plays a role in viral genome replication by driving entry of quiescent cells into the cell cycle. Stimulation of progression from G1 to S phase allows the virus to efficiently use the cellular DNA replicating machinery to achieve viral genome replication. E1A protein has both transforming and trans-activating activities. Induces the disassembly of the E2F1 transcription factor from RB1 by direct competition for the same binding site on RB1, with subsequent transcriptional activation of E2F1-regulated S-phase genes and of the E2 region of the adenoviral genome. Release of E2F1 leads to the ARF-mediated inhibition of MDM2 and causes TP53/p53 to accumulate because it is not targeted for degradation by MDM2-mediated ubiquitination anymore. This increase in TP53, in turn, would arrest the cell proliferation and direct its death but this effect is counteracted by the viral protein E1B-55K. Inactivation of the ability of RB1 to arrest the cell cycle is critical for cellular transformation, uncontrolled cellular growth and proliferation induced by viral infection. Interaction with RBX1 and CUL1 inhibits ubiquitination of the proteins targeted by SCF(FBXW7) ubiquitin ligase complex, and may be linked to unregulated host cell proliferation. The tumorigenesis-restraining activity of E1A may be related to the disruption of the host CtBP-CtIP complex through the CtBP binding motif. The sequence is that of Early E1A protein from Canine adenovirus serotype 2 (strain Toronto A 26-61) (CAdV-2).